The sequence spans 393 residues: Matrix metalloproteinase-23 (393 aa).

Over 1-20 (MGRGACVPSAASGAGDRARQ) the chain is Cytoplasmic. Positions 1-81 (MGRGACVPSA…PHPPVPRRRR (81 aa)) are excised as a propeptide. The helical; Signal-anchor for type II membrane protein transmembrane segment at 21–41 (LGAVLGALCLFPALVLLAWPG) threads the bilayer. Residues 42-393 (TPANGAGARV…TYSWRIRVRS (352 aa)) lie on the Lumenal side of the membrane. Residues 60 to 79 (TSGVLASGSLGPPHPPVPRR) are disordered. Residues Asn95 and Asn151 are each glycosylated (N-linked (GlcNAc...) asparagine). Residue His214 participates in Zn(2+) binding. Glu215 is a catalytic residue. His218 and His224 together coordinate Zn(2+). A glycan (N-linked (GlcNAc...) asparagine) is linked at Asn235. One can recognise a ShKT domain in the interval 258-292 (CLDRLFVCASWARRGFCDTRRRLMKRLCPSSCDFC). 3 disulfides stabilise this stretch: Cys258–Cys292, Cys265–Cys285, and Cys274–Cys289. The 86-residue stretch at 298-383 (PTVAATPPPP…VVRRRQRVLS (86 aa)) folds into the Ig-like C2-type domain. The N-linked (GlcNAc...) asparagine glycan is linked to Asn319. The cysteines at positions 324 and 373 are disulfide-linked.

Belongs to the peptidase M10A family. It depends on Zn(2+) as a cofactor. In terms of processing, N-glycosylated. Proteolytic cleavage might yield an active form.

It localises to the membrane. The protein localises to the endoplasmic reticulum membrane. Its function is as follows. Protease. May regulate the surface expression of some potassium channels by retaining them in the endoplasmic reticulum. This Bos taurus (Bovine) protein is Matrix metalloproteinase-23 (MMP23).